We begin with the raw amino-acid sequence, 329 residues long: Phospho-N-acetylmuramoyl-pentapeptide-transferase (329 aa).

9 helical membrane passes run 1–21, 53–73, 76–96, 109–129, 141–161, 175–195, 198–218, 237–257, and 309–329; these read MLLN…IGIP, MGGF…ALVF, FSPA…IGFL, GLTA…SYFI, ILSW…IWLV, GLAS…AVVH, YDVL…FVFN, FLAI…IGAV, and IVFW…YFAF.

Belongs to the glycosyltransferase 4 family. MraY subfamily. The cofactor is Mg(2+).

Its subcellular location is the cell membrane. The enzyme catalyses UDP-N-acetyl-alpha-D-muramoyl-L-alanyl-gamma-D-glutamyl-L-lysyl-D-alanyl-D-alanine + di-trans,octa-cis-undecaprenyl phosphate = Mur2Ac(oyl-L-Ala-gamma-D-Glu-L-Lys-D-Ala-D-Ala)-di-trans,octa-cis-undecaprenyl diphosphate + UMP. It participates in cell wall biogenesis; peptidoglycan biosynthesis. Functionally, catalyzes the initial step of the lipid cycle reactions in the biosynthesis of the cell wall peptidoglycan: transfers peptidoglycan precursor phospho-MurNAc-pentapeptide from UDP-MurNAc-pentapeptide onto the lipid carrier undecaprenyl phosphate, yielding undecaprenyl-pyrophosphoryl-MurNAc-pentapeptide, known as lipid I. This chain is Phospho-N-acetylmuramoyl-pentapeptide-transferase, found in Lactococcus lactis subsp. cremoris (strain SK11).